The chain runs to 393 residues: ATP phosphoribosyltransferase regulatory subunit (393 aa).

Belongs to the class-II aminoacyl-tRNA synthetase family. HisZ subfamily. In terms of assembly, heteromultimer composed of HisG and HisZ subunits.

The protein resides in the cytoplasm. It participates in amino-acid biosynthesis; L-histidine biosynthesis; L-histidine from 5-phospho-alpha-D-ribose 1-diphosphate: step 1/9. Required for the first step of histidine biosynthesis. May allow the feedback regulation of ATP phosphoribosyltransferase activity by histidine. The protein is ATP phosphoribosyltransferase regulatory subunit of Marinobacter nauticus (strain ATCC 700491 / DSM 11845 / VT8) (Marinobacter aquaeolei).